A 491-amino-acid polypeptide reads, in one-letter code: UDP-N-acetylmuramate--L-alanine ligase (491 aa).

ATP is bound at residue 126 to 132; it reads GTHGKTT.

The protein belongs to the MurCDEF family.

The protein localises to the cytoplasm. The catalysed reaction is UDP-N-acetyl-alpha-D-muramate + L-alanine + ATP = UDP-N-acetyl-alpha-D-muramoyl-L-alanine + ADP + phosphate + H(+). Its pathway is cell wall biogenesis; peptidoglycan biosynthesis. Its function is as follows. Cell wall formation. The polypeptide is UDP-N-acetylmuramate--L-alanine ligase (Salmonella gallinarum (strain 287/91 / NCTC 13346)).